The sequence spans 258 residues: Putative cysteine-rich repeat secretory protein 16 (258 aa).

A signal peptide spans 1–30 (MYYSSPTCFVLITIFAVVVTQLIFMRTVSS). Gnk2-homologous domains are found at residues 37–139 (YLNH…PFDT) and 144–247 (DKDN…LYPF).

This sequence belongs to the cysteine-rich repeat secretory protein family.

Its subcellular location is the secreted. This is Putative cysteine-rich repeat secretory protein 16 (CRRSP16) from Arabidopsis thaliana (Mouse-ear cress).